Reading from the N-terminus, the 114-residue chain is UPF0342 protein LSEI_1724 (114 aa).

Belongs to the UPF0342 family.

This Lacticaseibacillus paracasei (strain ATCC 334 / BCRC 17002 / CCUG 31169 / CIP 107868 / KCTC 3260 / NRRL B-441) (Lactobacillus paracasei) protein is UPF0342 protein LSEI_1724.